The primary structure comprises 322 residues: Cysteine protease YopT (322 aa).

Residues Cys139, His258, and Asp274 contribute to the active site.

It belongs to the peptidase C58 family. Interacts with human ARHA.

The protein resides in the secreted. Its function is as follows. Cysteine protease, which is translocated into infected cells and plays a central role in pathogenesis by cleaving the C-terminus end of the human small GTPase RhoA/ARHA, a regulator of cytoskeleton. Once cleaved, ARHA loses its lipid modification, and is released from the cell membrane, leading to the subsequent disruption of actin cytoskeleton of the host cell. The sequence is that of Cysteine protease YopT (yopT) from Yersinia pestis.